Here is a 284-residue protein sequence, read N- to C-terminus: Aliphatic sulfonates import ATP-binding protein SsuB (284 aa).

In terms of domain architecture, ABC transporter spans 21–242; sequence LRIAHAVKRY…HRGAPAFARL (222 aa). Residue 53–60 participates in ATP binding; it reads GRSGCGKS.

This sequence belongs to the ABC transporter superfamily. Aliphatic sulfonates importer (TC 3.A.1.17.2) family. As to quaternary structure, the complex is composed of two ATP-binding proteins (SsuB), two transmembrane proteins (SsuC) and a solute-binding protein (SsuA).

It localises to the cell inner membrane. The enzyme catalyses ATP + H2O + aliphatic sulfonate-[sulfonate-binding protein]Side 1 = ADP + phosphate + aliphatic sulfonateSide 2 + [sulfonate-binding protein]Side 1.. Functionally, part of the ABC transporter complex SsuABC involved in aliphatic sulfonates import. Responsible for energy coupling to the transport system. This Ralstonia nicotianae (strain ATCC BAA-1114 / GMI1000) (Ralstonia solanacearum) protein is Aliphatic sulfonates import ATP-binding protein SsuB.